A 318-amino-acid polypeptide reads, in one-letter code: Glutathione synthetase (318 aa).

The ATP-grasp domain maps to 129 to 314 (KLAITEFPDL…VPEMFAVALE (186 aa)). Residue 155-211 (HAAQGDVIVKPLDDMGGTGIFRLQRSEPNLNAILETLTDNGTRTIMAQRYIPEIVKG) coordinates ATP. Mg(2+) is bound by residues glutamate 285 and asparagine 287.

This sequence belongs to the prokaryotic GSH synthase family. Mg(2+) serves as cofactor. The cofactor is Mn(2+).

It carries out the reaction gamma-L-glutamyl-L-cysteine + glycine + ATP = glutathione + ADP + phosphate + H(+). Its pathway is sulfur metabolism; glutathione biosynthesis; glutathione from L-cysteine and L-glutamate: step 2/2. The polypeptide is Glutathione synthetase (Bordetella pertussis (strain Tohama I / ATCC BAA-589 / NCTC 13251)).